Here is a 239-residue protein sequence, read N- to C-terminus: Large ribosomal subunit protein uL1 (239 aa).

This sequence belongs to the universal ribosomal protein uL1 family. Part of the 50S ribosomal subunit.

In terms of biological role, binds directly to 23S rRNA. The L1 stalk is quite mobile in the ribosome, and is involved in E site tRNA release. Functionally, protein L1 is also a translational repressor protein, it controls the translation of the L11 operon by binding to its mRNA. The chain is Large ribosomal subunit protein uL1 from Rickettsia conorii (strain ATCC VR-613 / Malish 7).